We begin with the raw amino-acid sequence, 608 residues long: ABC transporter ATP-binding protein RamB (608 aa).

The next 5 membrane-spanning stretches (helical) occupy residues 25-45 (GVLV…FLVG), 66-86 (LWLG…RGVF), 141-161 (GLVL…LGLL), 166-186 (ALLV…LVTL), and 253-273 (AALG…VEWL). The 267-residue stretch at 30 to 296 (LALWSLAESG…FTYLVQSLLP (267 aa)) folds into the ABC transmembrane type-1 domain. Residues 321 to 362 (GPEPEPEPEPEPEPEPELGSGLEPEPEPASEPESGPSTASAS) form a disordered region. The span at 324-336 (PEPEPEPEPEPEP) shows a compositional bias: acidic residues. Residues 351-362 (EPESGPSTASAS) are compositionally biased toward low complexity. Positions 376-605 (VELRSVTLSY…SPLYRDLTGH (230 aa)) constitute an ABC transporter domain. Position 410–417 (410–417 (GPSGIGKS)) interacts with ATP.

This sequence belongs to the ABC transporter superfamily.

Its subcellular location is the cell membrane. Its function is as follows. Probably involved in exporting SapB from the cell. Expression of the ram locus (ramA, ramB and ramR) induces rapid aerial mycelium formation in S.lividans. In Streptomyces coelicolor (strain ATCC BAA-471 / A3(2) / M145), this protein is ABC transporter ATP-binding protein RamB.